We begin with the raw amino-acid sequence, 221 residues long: ATP-dependent dethiobiotin synthetase BioD (221 aa).

Residue 12 to 17 (EVGKTV) coordinates ATP. Thr-16 serves as a coordination point for Mg(2+). Residue Lys-39 is part of the active site. Thr-43 lines the substrate pocket. ATP-binding positions include Asp-47, 105–108 (EGLG), and 165–166 (SC). Asp-47 and Glu-105 together coordinate Mg(2+).

This sequence belongs to the dethiobiotin synthetase family. In terms of assembly, homodimer. Mg(2+) serves as cofactor.

The protein resides in the cytoplasm. It catalyses the reaction (7R,8S)-7,8-diammoniononanoate + CO2 + ATP = (4R,5S)-dethiobiotin + ADP + phosphate + 3 H(+). The enzyme catalyses (7R,8S)-8-amino-7-(carboxyamino)nonanoate + ATP = (4R,5S)-dethiobiotin + ADP + phosphate + H(+). It participates in cofactor biosynthesis; biotin biosynthesis; biotin from 7,8-diaminononanoate: step 1/2. In terms of biological role, catalyzes a mechanistically unusual reaction, the ATP-dependent insertion of CO2 between the N7 and N8 nitrogen atoms of 7,8-diaminopelargonic acid (DAPA, also called 7,8-diammoniononanoate) to form a ureido ring. This cyanobacterium does not encode bioA (which catalyzes the formation of the precursor for this reaction in the cannonical pathway), instead it encodes bioU, which replaces bioA and also performs the first half of the cannonical BioD reaction. Thus in this organism BioD has a different substrate. The sequence is that of ATP-dependent dethiobiotin synthetase BioD from Crocosphaera subtropica (strain ATCC 51142 / BH68) (Cyanothece sp. (strain ATCC 51142)).